The sequence spans 597 residues: Lipoprotein LpqB (597 aa).

Positions 1-28 are cleaved as a signal peptide; the sequence is MTPGSRSAMRSRSVCGAIALAVLVTVSG. Cysteine 29 is lipidated: N-palmitoyl cysteine. A lipid anchor (S-diacylglycerol cysteine) is attached at cysteine 29. The segment covering 39 to 51 has biased composition (polar residues); it reads QAIGTINRDSPGS. The interval 39-59 is disordered; that stretch reads QAIGTINRDSPGSSVAAPAPG.

It belongs to the LpqB lipoprotein family.

The protein localises to the cell membrane. The polypeptide is Lipoprotein LpqB (Rhodococcus opacus (strain B4)).